The sequence spans 327 residues: 4-diphosphocytidyl-2-C-methyl-D-erythritol kinase (327 aa).

The active site involves Lys14. ATP is bound at residue 97 to 107; it reads PDGAGLGGGSA. The active site involves Asp140.

It belongs to the GHMP kinase family. IspE subfamily.

It catalyses the reaction 4-CDP-2-C-methyl-D-erythritol + ATP = 4-CDP-2-C-methyl-D-erythritol 2-phosphate + ADP + H(+). It functions in the pathway isoprenoid biosynthesis; isopentenyl diphosphate biosynthesis via DXP pathway; isopentenyl diphosphate from 1-deoxy-D-xylulose 5-phosphate: step 3/6. Functionally, catalyzes the phosphorylation of the position 2 hydroxy group of 4-diphosphocytidyl-2C-methyl-D-erythritol. The sequence is that of 4-diphosphocytidyl-2-C-methyl-D-erythritol kinase from Oleidesulfovibrio alaskensis (strain ATCC BAA-1058 / DSM 17464 / G20) (Desulfovibrio alaskensis).